A 684-amino-acid chain; its full sequence is Threonine--tRNA ligase (684 aa).

The TGS domain maps to Met1–Ala66. A catalytic region spans residues Asp261 to Pro567. Zn(2+)-binding residues include Cys366, His417, and His544.

It belongs to the class-II aminoacyl-tRNA synthetase family. In terms of assembly, homodimer. It depends on Zn(2+) as a cofactor.

The protein resides in the cytoplasm. It catalyses the reaction tRNA(Thr) + L-threonine + ATP = L-threonyl-tRNA(Thr) + AMP + diphosphate + H(+). In terms of biological role, catalyzes the attachment of threonine to tRNA(Thr) in a two-step reaction: L-threonine is first activated by ATP to form Thr-AMP and then transferred to the acceptor end of tRNA(Thr). Also edits incorrectly charged L-seryl-tRNA(Thr). The protein is Threonine--tRNA ligase of Mycobacterium avium (strain 104).